The primary structure comprises 249 residues: Diaminopimelate epimerase (249 aa).

Asparagine 11 and asparagine 60 together coordinate substrate. Cysteine 69 serves as the catalytic Proton donor. Residues 70–71 (GN), asparagine 164, and 182–183 (ER) each bind substrate. Cysteine 192 serves as the catalytic Proton acceptor. Substrate is bound at residue 193 to 194 (GT).

It belongs to the diaminopimelate epimerase family. In terms of assembly, homodimer.

Its subcellular location is the cytoplasm. The enzyme catalyses (2S,6S)-2,6-diaminopimelate = meso-2,6-diaminopimelate. It participates in amino-acid biosynthesis; L-lysine biosynthesis via DAP pathway; DL-2,6-diaminopimelate from LL-2,6-diaminopimelate: step 1/1. In terms of biological role, catalyzes the stereoinversion of LL-2,6-diaminopimelate (L,L-DAP) to meso-diaminopimelate (meso-DAP), a precursor of L-lysine and an essential component of the bacterial peptidoglycan. This chain is Diaminopimelate epimerase, found in Campylobacter jejuni subsp. doylei (strain ATCC BAA-1458 / RM4099 / 269.97).